The chain runs to 257 residues: uncharacterized protein (257 aa).

A helical membrane pass occupies residues 7-27 (IGILEIVVILSILITSVSLAY).

It is found in the membrane. This is an uncharacterized protein from Methanocaldococcus jannaschii (strain ATCC 43067 / DSM 2661 / JAL-1 / JCM 10045 / NBRC 100440) (Methanococcus jannaschii).